The sequence spans 765 residues: Protein BCH2 (765 aa).

The interval 1–31 (MSFLWGSTKSKKGKNKKAAGSLPSGVVPQQR) is disordered. A CHS5-binding region spans residues 735 to 765 (LECLSKNRNEACLAYERPLPDLPSTIKPLAD).

This sequence belongs to the CHAPS family. As to quaternary structure, component of the CHS5/6 complex composed of the 4 CHAPS proteins BCH1, BCH2, BUD7, and CHS6 as well as at least CHS5 and GTP-bound ARF1. The complex interacts with the cargo protein CHS3.

The protein resides in the golgi apparatus. It is found in the trans-Golgi network membrane. Functionally, member of the CHS5-ARF1P-binding proteins (CHAPS) which mediates export of specific cargo proteins, including chitin synthase CHS3. This Saccharomyces cerevisiae (strain ATCC 204508 / S288c) (Baker's yeast) protein is Protein BCH2 (BCH2).